The sequence spans 202 residues: Josephin-1 (202 aa).

A Phosphoserine modification is found at serine 15. The Josephin domain occupies 23 to 202; the sequence is PPQIYHEKQR…EAHQSWRTDV (180 aa). The active-site Nucleophile is cysteine 36. Histidine 139 serves as the catalytic Proton acceptor.

Interacts with beta-actin/ACTB. Post-translationally, monoubiquitinated. Ubiquitination activates deubiquitination activity in vitro.

It is found in the cell membrane. The protein localises to the cytoplasm. The catalysed reaction is Thiol-dependent hydrolysis of ester, thioester, amide, peptide and isopeptide bonds formed by the C-terminal Gly of ubiquitin (a 76-residue protein attached to proteins as an intracellular targeting signal).. Functionally, deubiquitinates monoubiquitinated probes (in vitro). When ubiquitinated, cleaves 'Lys-63'-linked and 'Lys-48'-linked poly-ubiquitin chains (in vitro), hence may act as a deubiquitinating enzyme. May increase macropinocytosis and suppress clathrin- and caveolae-mediated endocytosis. May enhance membrane dynamics and cell motility independently of its catalytic activity. This is Josephin-1 (JOSD1) from Pongo abelii (Sumatran orangutan).